We begin with the raw amino-acid sequence, 71 residues long: MSYYRRRLSPIKPGEPIDYKDVDLLRKFITERGKILPRRITGLTAKQQRELTLAIKRSRLVALLPFINAEG.

Belongs to the bacterial ribosomal protein bS18 family. In terms of assembly, part of the 30S ribosomal subunit. Forms a tight heterodimer with protein bS6.

In terms of biological role, binds as a heterodimer with protein bS6 to the central domain of the 16S rRNA, where it helps stabilize the platform of the 30S subunit. The protein is Small ribosomal subunit protein bS18 of Nostoc sp. (strain PCC 7120 / SAG 25.82 / UTEX 2576).